The sequence spans 770 residues: Protein argonaute (770 aa).

Residues 1–151 (MKAKVVINLV…VIHIIHQIQS (151 aa)) are N-terminal domain. Residues 154–272 (TLWELVNKDP…LLPQLVVPTY (119 aa)) form the PAZ domain. Positions 276–361 (QLESDVAKEI…SQLLLWTNYS (86 aa)) are interdomain connector. A mid domain region spans residues 362-544 (RKYPVILPYE…LSKLGVKYYV (183 aa)). The Piwi domain occupies 473–756 (GLAFIAARNK…FANAIRNEWK (284 aa)). Residues aspartate 558, glutamate 596, aspartate 628, and histidine 745 contribute to the active site. Aspartate 558 provides a ligand contact to Mn(2+). Residues aspartate 628, histidine 745, and valine 770 each contribute to the Mn(2+) site.

This sequence belongs to the argonaute family. Long pAgo subfamily. As to quaternary structure, monomer. Mn(2+) serves as cofactor.

Its activity is regulated as follows. Inhibited at greater than 500 mM NaCl. A DNA-guided ssDNA endonuclease that may play a role in defense against invading mobile genetic elements. Uses short 5'-phospho-ssDNA sequences as guides (gDNA) to bind complementary target strands, resulting in cleavage of the target DNA (tDNA). Endonucleolytically cleaves DNA in short dsDNA (the gDNA indicates where to cleave on the tDNA). Efficient guide-dependent target DNA cleavage requires a minimal gDNA length of 15 nucleotides (nt) and works up to at least 31 nt. Overexpression decreases plasmid transformation efficiency. Has no appreciable activity with gRNA or on target RNA. Also has guide-independent activity on plasmid DNA called 'chopping'. The cleavage site is 10 nucleotides (nt) downstream of the target residue base-paired with the 5'-end of the gDNA, cleavage is insensitive to adenine methylation. DNA cleavage produces 5'-phosphomonoesters (as it can be ligated by T4 DNA ligase). The sequence is that of Protein argonaute from Pyrococcus furiosus (strain ATCC 43587 / DSM 3638 / JCM 8422 / Vc1).